The primary structure comprises 427 residues: Phosphoglucosamine mutase (427 aa).

Catalysis depends on S94, which acts as the Phosphoserine intermediate. S94, D228, D230, and D232 together coordinate Mg(2+). S94 carries the post-translational modification Phosphoserine.

This sequence belongs to the phosphohexose mutase family. It depends on Mg(2+) as a cofactor. In terms of processing, activated by phosphorylation.

The catalysed reaction is alpha-D-glucosamine 1-phosphate = D-glucosamine 6-phosphate. In terms of biological role, catalyzes the conversion of glucosamine-6-phosphate to glucosamine-1-phosphate. This chain is Phosphoglucosamine mutase, found in Thermotoga sp. (strain RQ2).